Consider the following 313-residue polypeptide: HTH-type transcriptional regulator CysB (313 aa).

Residues 1-59 (MNLHQFRFVREAVRQNFNLTEAAKALYTSQPGVSKAIIELEDELGVEIFTRHGKRVRSL) enclose the HTH lysR-type domain. Positions 19–38 (LTEAAKALYTSQPGVSKAII) form a DNA-binding region, H-T-H motif.

The protein belongs to the LysR transcriptional regulatory family.

Its function is as follows. Transcriptional regulator preferentially involved in the control of sulfate transport and reduction. Binds to DNA at target promoter regions. The protein is HTH-type transcriptional regulator CysB of Burkholderia cenocepacia (strain ATCC BAA-245 / DSM 16553 / LMG 16656 / NCTC 13227 / J2315 / CF5610) (Burkholderia cepacia (strain J2315)).